Consider the following 323-residue polypeptide: Peroxisomal and mitochondrial division factor 2 (323 aa).

Disordered stretches follow at residues 1–55, 73–92, and 120–143; these read MAEE…NDAI, ESKA…KSDE, and TART…SQKG. The Cytoplasmic segment spans residues 1–297; the sequence is MAEERSLNGE…WSPNVTAVGS (297 aa). The segment covering 13 to 26 has biased composition (acidic residues); that stretch reads GQDDESFFDSDQQG. Residues 28–278 adopt a coiled-coil conformation; it reads DGKSTELNQK…INGLKNVVEE (251 aa). Residues 298–318 traverse the membrane as a helical segment; that stretch reads GGAVAAVAVAVAGAAVVCYIY. Over 319–323 the chain is Mitochondrial intermembrane; it reads HSRRV.

Homodimer. Interacts with PMD1.

It is found in the mitochondrion outer membrane. Functionally, involved in morphogenesis and proliferation of mitochondria. Does not act redundantly with PMD1. Is not involved in peroxisomal proliferation. The polypeptide is Peroxisomal and mitochondrial division factor 2 (Arabidopsis thaliana (Mouse-ear cress)).